The following is an 898-amino-acid chain: Alanine--tRNA ligase (898 aa).

Residues His-589, His-593, Cys-693, and His-697 each coordinate Zn(2+).

Belongs to the class-II aminoacyl-tRNA synthetase family. It depends on Zn(2+) as a cofactor.

It localises to the cytoplasm. It catalyses the reaction tRNA(Ala) + L-alanine + ATP = L-alanyl-tRNA(Ala) + AMP + diphosphate. Catalyzes the attachment of alanine to tRNA(Ala) in a two-step reaction: alanine is first activated by ATP to form Ala-AMP and then transferred to the acceptor end of tRNA(Ala). Also edits incorrectly charged Ser-tRNA(Ala) and Gly-tRNA(Ala) via its editing domain. This Methanothermobacter thermautotrophicus (strain ATCC 29096 / DSM 1053 / JCM 10044 / NBRC 100330 / Delta H) (Methanobacterium thermoautotrophicum) protein is Alanine--tRNA ligase.